Reading from the N-terminus, the 429-residue chain is Glucose-1-phosphate adenylyltransferase (429 aa).

Residues G162, 177–178, and S209 contribute to the alpha-D-glucose 1-phosphate site; that span reads EK.

Belongs to the bacterial/plant glucose-1-phosphate adenylyltransferase family. As to quaternary structure, homotetramer.

It catalyses the reaction alpha-D-glucose 1-phosphate + ATP + H(+) = ADP-alpha-D-glucose + diphosphate. The protein operates within glycan biosynthesis; glycogen biosynthesis. Activated by 3-phosphoglycerate and inhibited by phosphate. Involved in the biosynthesis of ADP-glucose, a building block required for the elongation reactions to produce glycogen. Catalyzes the reaction between ATP and alpha-D-glucose 1-phosphate (G1P) to produce pyrophosphate and ADP-Glc. In Nostoc sp. (strain PCC 7120 / SAG 25.82 / UTEX 2576), this protein is Glucose-1-phosphate adenylyltransferase.